A 783-amino-acid polypeptide reads, in one-letter code: Aconitate hydratase, mitochondrial (783 aa).

The N-terminal 25 residues, 1 to 25 (MITTRLARMGALAPKSRLLFGTRGM), are a transit peptide targeting the mitochondrion. Substrate contacts are provided by residues glutamine 102 and 195–197 (DSH). Residues cysteine 388, cysteine 451, and cysteine 454 each contribute to the [4Fe-4S] cluster site. 2 residues coordinate substrate: arginine 477 and arginine 482. A disordered region spans residues 524–555 (EFKLKAPTGDGLPSRGYDPGRDTYQAPPTDRS). Residues arginine 610 and 673 to 674 (SR) contribute to the substrate site.

Belongs to the aconitase/IPM isomerase family. [4Fe-4S] cluster serves as cofactor.

Its subcellular location is the mitochondrion. The enzyme catalyses citrate = D-threo-isocitrate. It catalyses the reaction (2R)-homocitrate = cis-homoaconitate + H2O. It participates in carbohydrate metabolism; tricarboxylic acid cycle; isocitrate from oxaloacetate: step 2/2. The protein operates within amino-acid biosynthesis; L-lysine biosynthesis via AAA pathway; L-alpha-aminoadipate from 2-oxoglutarate: step 2/5. Its function is as follows. Catalyzes the isomerization of citrate to isocitrate via cis-aconitate, a step in the citric acid cycle. Also catalyzes the reversible dehydration of (R)-homocitrate to cis-homoaconitate, a step in the alpha-aminoadipate pathway for lysine biosynthesis. This Emericella nidulans (strain FGSC A4 / ATCC 38163 / CBS 112.46 / NRRL 194 / M139) (Aspergillus nidulans) protein is Aconitate hydratase, mitochondrial (acoA).